Here is a 133-residue protein sequence, read N- to C-terminus: Small ribosomal subunit protein uS9 (133 aa).

Residues 101–133 (MKPKGLLTRDPREVERKKYGLKKARRAPQFSKR) form a disordered region. Positions 107-118 (LTRDPREVERKK) are enriched in basic and acidic residues. Positions 119–133 (YGLKKARRAPQFSKR) are enriched in basic residues.

The protein belongs to the universal ribosomal protein uS9 family.

This chain is Small ribosomal subunit protein uS9, found in Deinococcus radiodurans (strain ATCC 13939 / DSM 20539 / JCM 16871 / CCUG 27074 / LMG 4051 / NBRC 15346 / NCIMB 9279 / VKM B-1422 / R1).